The chain runs to 529 residues: Cytokinin dehydrogenase 4 (529 aa).

Positions 1–27 (MRGAMKPSIVHCLKLLMLLALGGVTMH) are cleaved as a signal peptide. Positions 63–244 (CSLLPAAVLH…TRARIALEPA (182 aa)) constitute an FAD-binding PCMH-type domain. Positions 99, 101, and 103 each coordinate FAD. Histidine 104 is subject to Pros-8alpha-FAD histidine. FAD is bound by residues serine 105, glutamine 109, aspartate 168, threonine 173, serine 179, valine 183, and isoleucine 234. Residues asparagine 285, asparagine 419, and asparagine 425 are each glycosylated (N-linked (GlcNAc...) asparagine). Residues tyrosine 479 and glutamine 517 each contribute to the FAD site.

This sequence belongs to the oxygen-dependent FAD-linked oxidoreductase family. In terms of assembly, monomer. It depends on FAD as a cofactor. In terms of tissue distribution, expressed in inflorescence meristems.

Its subcellular location is the secreted. It localises to the extracellular space. The enzyme catalyses N(6)-dimethylallyladenine + A + H2O = 3-methyl-2-butenal + adenine + AH2. Functionally, catalyzes the oxidation of cytokinins, a family of N(6)-substituted adenine derivatives that are plant hormones, where the substituent is an isopentenyl group. The polypeptide is Cytokinin dehydrogenase 4 (CKX4) (Oryza sativa subsp. japonica (Rice)).